A 193-amino-acid chain; its full sequence is Ion-translocating oxidoreductase complex subunit A (193 aa).

A run of 6 helical transmembrane segments spans residues 5–25, 39–59, 67–87, 102–122, 134–154, and 171–191; these read LLLL…FLGL, IGMG…SYLV, LGIE…VVQF, VLGI…VALL, IIYG…FSAM, and SIAM…TGLV.

It belongs to the NqrDE/RnfAE family. The complex is composed of six subunits: RnfA, RnfB, RnfC, RnfD, RnfE and RnfG.

The protein resides in the cell inner membrane. Part of a membrane-bound complex that couples electron transfer with translocation of ions across the membrane. This chain is Ion-translocating oxidoreductase complex subunit A, found in Aliivibrio fischeri (strain ATCC 700601 / ES114) (Vibrio fischeri).